A 169-amino-acid chain; its full sequence is Crossover junction endodeoxyribonuclease RuvC (169 aa).

Residues Asp15, Glu75, and Asp147 contribute to the active site. Mg(2+) is bound by residues Asp15, Glu75, and Asp147.

This sequence belongs to the RuvC family. As to quaternary structure, homodimer which binds Holliday junction (HJ) DNA. The HJ becomes 2-fold symmetrical on binding to RuvC with unstacked arms; it has a different conformation from HJ DNA in complex with RuvA. In the full resolvosome a probable DNA-RuvA(4)-RuvB(12)-RuvC(2) complex forms which resolves the HJ. Mg(2+) serves as cofactor.

It is found in the cytoplasm. It carries out the reaction Endonucleolytic cleavage at a junction such as a reciprocal single-stranded crossover between two homologous DNA duplexes (Holliday junction).. The RuvA-RuvB-RuvC complex processes Holliday junction (HJ) DNA during genetic recombination and DNA repair. Endonuclease that resolves HJ intermediates. Cleaves cruciform DNA by making single-stranded nicks across the HJ at symmetrical positions within the homologous arms, yielding a 5'-phosphate and a 3'-hydroxyl group; requires a central core of homology in the junction. The consensus cleavage sequence is 5'-(A/T)TT(C/G)-3'. Cleavage occurs on the 3'-side of the TT dinucleotide at the point of strand exchange. HJ branch migration catalyzed by RuvA-RuvB allows RuvC to scan DNA until it finds its consensus sequence, where it cleaves and resolves the cruciform DNA. In Caulobacter sp. (strain K31), this protein is Crossover junction endodeoxyribonuclease RuvC.